Consider the following 1225-residue polypeptide: NHS-like protein 2 (1225 aa).

9 disordered regions span residues 161–180 (TFRSSDEATKPTPNPRPQSA), 193–213 (QLSEDETTTQGVRAPEASLSL), 291–371 (NFSQ…ESMG), 466–510 (HMPE…TTDV), 543–632 (LSAQ…PEST), 670–766 (QGSS…KFPK), 812–1009 (KTNP…KKPS), 1042–1093 (DTKC…DKTA), and 1128–1203 (KEPG…KTTN). 2 stretches are compositionally biased toward polar residues: residues 291 to 315 (NFSQRDQGHSNSPAGSVAHSTTSDI) and 339 to 350 (SLTSPVLRTPSS). Ser500 bears the Phosphoserine mark. Over residues 552–568 (RRQRSKSISLRKAKKKP) the composition is skewed to basic residues. Ser576 carries the post-translational modification Phosphoserine. Positions 675-688 (SLASPSTSRATTPS) are enriched in low complexity. A Phosphoserine modification is found at Ser691. Composition is skewed to polar residues over residues 710 to 730 (SPSSGYSSQSETPTPTVSMSL) and 812 to 827 (KTNPNQPIMPMVTQSD). Positions 841–851 (PEDDIESPEYA) are enriched in acidic residues. Residues 852–867 (EEPRAEEVFTLPERKT) are compositionally biased toward basic and acidic residues. Polar residues-rich tracts occupy residues 939 to 968 (GESTAPSSLVFTPFASSSDAFFSGTQQPPQ) and 1054 to 1065 (SLGQRVTSTPQA). Position 1054 is a phosphoserine (Ser1054). Over residues 1082–1093 (TEEKSLISDKTA) the composition is skewed to basic and acidic residues. Residues 1138-1155 (RTSSHSPIKNTAESPISE) show a composition bias toward polar residues. The segment covering 1156–1166 (STATAGSGSSA) has biased composition (low complexity).

The protein belongs to the NHS family.

This chain is NHS-like protein 2, found in Homo sapiens (Human).